A 128-amino-acid chain; its full sequence is AECSVDIQGNDQMQFSTNAITVDKACKTFTVNLSHPGSLPKNVMGHNWVLTTAADMQGVVTDGMAAGLDKNYVKDGDTRVIAHTKIIGSGEKDSVTFDVSKLKAGDAYAFFCSFPGHSAMMKGTLTLK.

The Plastocyanin-like domain maps to Ala1 to Lys128. Residues His46, Cys112, His117, and Met121 each contribute to the Cu cation site.

Its subcellular location is the periplasm. In terms of biological role, transfers electrons from cytochrome c551 to cytochrome oxidase. The chain is Azurin from Pseudomonas denitrificans.